The primary structure comprises 415 residues: Erythronolide mycarosyltransferase (415 aa).

This sequence belongs to the glycosyltransferase 28 family.

It catalyses the reaction dTDP-beta-L-mycarose + erythronolide B = 3-O-alpha-L-mycarosylerythronolide B + dTDP + H(+). Involved in the biosynthesis of the macrolide antibiotic erythromycin. Catalyzes the reversible transfer of mycarosyl from dTDP-beta-L-mycarose to erythronolide B to yield 3-alpha-L-mycarosylerythronolide B. It can also use TDP-beta-L-cladinose. This is Erythronolide mycarosyltransferase from Saccharopolyspora erythraea (Streptomyces erythraeus).